Reading from the N-terminus, the 462-residue chain is ATP synthase subunit beta (462 aa).

Residue 151–158 coordinates ATP; sequence GGAGVGKT.

Belongs to the ATPase alpha/beta chains family. F-type ATPases have 2 components, CF(1) - the catalytic core - and CF(0) - the membrane proton channel. CF(1) has five subunits: alpha(3), beta(3), gamma(1), delta(1), epsilon(1). CF(0) has four main subunits: a(1), b(1), b'(1) and c(9-12).

Its subcellular location is the cell inner membrane. The enzyme catalyses ATP + H2O + 4 H(+)(in) = ADP + phosphate + 5 H(+)(out). In terms of biological role, produces ATP from ADP in the presence of a proton gradient across the membrane. The catalytic sites are hosted primarily by the beta subunits. The protein is ATP synthase subunit beta of Chlorobium phaeobacteroides (strain DSM 266 / SMG 266 / 2430).